A 674-amino-acid polypeptide reads, in one-letter code: Probable copper-transporting P-type ATPase B (674 aa).

The segment at 1–20 is disordered; sequence MNHSNHMHHDNHESHHHYSG. 6 helical membrane-spanning segments follow: residues 32–52, 57–77, 95–115, 127–147, 284–304, and 315–335; these read FFVS…MGVN, FTFP…FFYG, GMMT…LYAF, TMDF…GHWI, GYLF…WMLI, and LVTV…PLVT. D367 (4-aspartylphosphate intermediate) is an active-site residue. Mg(2+)-binding residues include D565 and D569. The next 2 helical transmembrane spans lie at 623-645 and 649-671; these read LWWG…AFIG and SPAV…AFTL.

Belongs to the cation transport ATPase (P-type) (TC 3.A.3) family. Type IB subfamily.

The protein localises to the cell membrane. It catalyses the reaction Cu(+)(in) + ATP + H2O = Cu(+)(out) + ADP + phosphate + H(+). Functionally, involved in copper transport. The protein is Probable copper-transporting P-type ATPase B (copB) of Staphylococcus haemolyticus (strain JCSC1435).